A 188-amino-acid polypeptide reads, in one-letter code: PRA1 family protein 3 (188 aa).

Position 1 is an N-acetylmethionine (Met-1). Residues 1 to 35 lie on the Cytoplasmic side of the membrane; sequence MDVNIAPLRAWDDFFPGSDRFARPDFRDISKWNNR. Transmembrane regions (helical) follow at residues 36-56 and 57-77; these read VVSN…MMIS and IVGF…VLVF. The Cytoplasmic segment spans residues 78–93; the sequence is TGFVWAAHNKDVLRRM. 2 consecutive transmembrane segments (helical) span residues 94–114 and 115–135; these read KKRY…FLIS and MFGG…LMFI. The tract at residues 103–117 is required for homodimer formation and heterodimer formation with ARL6IP1; it reads MVVMLASYFLISMFG. Residues 136 to 188 lie on the Cytoplasmic side of the membrane; the sequence is HASLRLRNLKNKLENKMEGIGLKRTPMGIVLDALEQQEEGINRLTDYISKVKE. The interval 136-188 is targeting to endoplasmic reticulum membrane; sequence HASLRLRNLKNKLENKMEGIGLKRTPMGIVLDALEQQEEGINRLTDYISKVKE.

The protein belongs to the PRA1 family. As to quaternary structure, homodimer. Heterodimer with ARL6IP1. Forms multimers. Interacts with ARL6. Interacts with prenylated RAB1A and RAB3A. Interacts with SLC1A1/EAAC1. Interacts with RTN2 (via first transmembrane domain). Does not interact with VAMP1, VAMP2 or VAMP3.

The protein resides in the endoplasmic reticulum membrane. It localises to the cell membrane. Its subcellular location is the cytoplasm. It is found in the cytoskeleton. Functionally, regulates intracellular concentrations of taurine and glutamate. Negatively modulates SLC1A1/EAAC1 glutamate transport activity by decreasing its affinity for glutamate in a PKC activity-dependent manner. Plays a role in the retention of SLC1A1/EAAC1 in the endoplasmic reticulum. This is PRA1 family protein 3 (ARL6IP5) from Homo sapiens (Human).